We begin with the raw amino-acid sequence, 839 residues long: Toll-like receptor 4 (839 aa).

A signal peptide spans 1-23 (MMSASRLAGTLIPAMAFLSCVRP). Topologically, residues 24 to 631 (ESWEPCVEVV…SLNITCQMNK (608 aa)) are extracellular. A disulfide bridge links cysteine 29 with cysteine 40. Asparagine 35 carries an N-linked (GlcNAc...) asparagine glycan. LRR repeat units lie at residues 55 to 76 (STKN…SFFS), 79 to 100 (ELQV…AYQS), 103 to 124 (HLST…AFSG), 127 to 148 (SLQK…PIGH), and 151 to 172 (TLKE…EYFS). The N-linked (GlcNAc...) asparagine glycan is linked to asparagine 173. LRR repeat units lie at residues 176–199 (NLEH…RVLH), 205–225 (NLSL…AFKE), and 227–247 (RLHK…KTCI). Asparagine 205 is a glycosylation site (N-linked (GlcNAc...) asparagine). The cysteines at positions 281 and 306 are disulfide-linked. 2 N-linked (GlcNAc...) asparagine glycosylation sites follow: asparagine 282 and asparagine 309. 10 LRR repeats span residues 331 to 351 (GWQH…LKLK), 352 to 373 (SLKR…VDLP), 374 to 394 (SLEF…CSQS), 400 to 422 (SLKY…LGLE), 423 to 444 (QLEH…SVFL), 448 to 456 (NLIYLDISH), 472 to 495 (SLEV…FTEL), 497 to 518 (NLTF…AFNS), 521 to 542 (SLQV…PYKC), and 545 to 565 (SLQV…QELQ). The cysteines at positions 390 and 391 are disulfide-linked. 2 N-linked (GlcNAc...) asparagine glycosylation sites follow: asparagine 497 and asparagine 526. An N-linked (GlcNAc...) asparagine glycan is attached at asparagine 575. Positions 579-629 (NDFACTCEHQSFLQWIKDQRQLLVEVERMECATPSDKQGMPVLSLNITCQM) constitute an LRRCT domain. Intrachain disulfides connect cysteine 583-cysteine 609 and cysteine 585-cysteine 627. N-linked (GlcNAc...) asparagine glycosylation is found at asparagine 624 and asparagine 630. A helical transmembrane segment spans residues 632–652 (TIIGVSVLSVLVVSVVAVLVY). Topologically, residues 653–839 (KFYFHLMLLA…GCNWQEATSI (187 aa)) are cytoplasmic. The region spanning 672–815 (NIYDAFVIYS…IFWRRLRKAL (144 aa)) is the TIR domain.

Belongs to the Toll-like receptor family. In terms of assembly, belongs to the lipopolysaccharide (LPS) receptor, a multi-protein complex containing at least CD14, LY96 and TLR4. Binding to bacterial LPS leads to homodimerization. Interacts with LY96 via the extracellular domain. Interacts with MYD88. Interacts (via TIR domains) with TIRAP. Interacts with TICAM2. Interacts with NOX4. Interacts with CNPY3. Interacts with HSP90B1. The interaction with both CNPY3 and HSP90B1 is required for proper folding in the endoplasmic reticulum. Interacts with MAP3K21; this interaction leads to negative regulation of TLR4 signaling. Interacts with CD36, following CD36 stimulation by oxLDL or amyloid-beta 42, and forms a heterodimer with TLR6. The trimeric complex is internalized and triggers inflammatory response. LYN kinase activity facilitates TLR4-TLR6 heterodimerization and signal initiation. Interacts with TICAM1 in response to LPS in a WDFY1-dependent manner. Interacts with WDFY1 in response to LPS. Interacts with SMPDL3B. Interacts with CEACAM1; upon lipopolysaccharide stimulation, forms a complex including TLR4 and the phosphorylated form of SYK and CEACAM1, which in turn, recruits PTPN6 that dephosphorylates SYK, reducing the production of reactive oxygen species (ROS) and lysosome disruption, which in turn, reduces the activity of the inflammasome. Interacts with RFTN1; the interaction occurs in response to lipopolysaccharide stimulation. Interacts with SCIMP; the interaction occurs in response to lipopolysaccharide stimulation and is enhanced by phosphorylation of SCIMP by LYN. This interaction facilitates the phosphorylation of TLR4 by LYN which elicits a selective cytokine response in macrophages. Interacts with TRAF3IP3. Interacts with TREM1; this interaction enhances TLR4-mediated inflammatory response. Interacts with ZG16B/PAUF. Interacts with CD82; this interaction inhibits TLR4-mediated signaling pathway. Interacts with neutrophil recruitment protein from Aedes aegypti saliva; the interaction probably promotes activation of canonical NF-kappa-B signaling in skin-resident macrophages and subsequent expression of neutrophil chemoattractants. (Microbial infection) In case of infection, interacts with uropathogenic E.coli protein TcpC. As to quaternary structure, (Microbial infection) In case of infection, interacts with B.melitensis protein TcpB; TcpB abolishes the TLR4-TIRAP interaction in vitro. In terms of assembly, (Microbial infection) Interacts with ebolavirus protein GP; this interaction leads to the production of proinflammatory cytokines and suppressor of cytokine signaling 1/SOCS1. In terms of processing, N-Glycosylation of Asn-526 and Asn-575 by STT3A-containing OST-A complex is necessary for the expression of TLR4 on the cell surface and the LPS-response. Likewise, mutants lacking two or more of the other N-glycosylation sites were deficient in interaction with LPS. Phosphorylated on tyrosine residues by LYN after binding lipopolysaccharide. Post-translationally, ubiquitinated by RNF128 via 'Lys-28'-linked polyubiquitin chains, leading to proteasomal degradation. In terms of tissue distribution, highly expressed in placenta, spleen and peripheral blood leukocytes. Detected in monocytes, macrophages, dendritic cells and several types of T-cells. Expressed in pancreatic cancer cells but not in normal pancreatic cells (at protein level).

The protein localises to the cell membrane. It localises to the early endosome. It is found in the cell projection. Its subcellular location is the ruffle. Its function is as follows. Transmembrane receptor that functions as a pattern recognition receptor recognizing pathogen- and damage-associated molecular patterns (PAMPs and DAMPs) to induce innate immune responses via downstream signaling pathways. At the plasma membrane, cooperates with LY96 to mediate the innate immune response to bacterial lipopolysaccharide (LPS). Also involved in LPS-independent inflammatory responses triggered by free fatty acids, such as palmitate, and Ni(2+). Mechanistically, acts via MYD88, TIRAP and TRAF6, leading to NF-kappa-B activation, cytokine secretion and the inflammatory response. Alternatively, CD14-mediated TLR4 internalization via endocytosis is associated with the initiation of a MYD88-independent signaling via the TICAM1-TBK1-IRF3 axis leading to type I interferon production. In addition to the secretion of proinflammatory cytokines, initiates the activation of NLRP3 inflammasome and formation of a positive feedback loop between autophagy and NF-kappa-B signaling cascade. In complex with TLR6, promotes inflammation in monocytes/macrophages by associating with TLR6 and the receptor CD86. Upon ligand binding, such as oxLDL or amyloid-beta 42, the TLR4:TLR6 complex is internalized and triggers inflammatory response, leading to NF-kappa-B-dependent production of CXCL1, CXCL2 and CCL9 cytokines, via MYD88 signaling pathway, and CCL5 cytokine, via TICAM1 signaling pathway. In myeloid dendritic cells, vesicular stomatitis virus glycoprotein G but not LPS promotes the activation of IRF7, leading to type I IFN production in a CD14-dependent manner. Required for the migration-promoting effects of ZG16B/PAUF on pancreatic cancer cells. This is Toll-like receptor 4 (TLR4) from Homo sapiens (Human).